The following is a 210-amino-acid chain: Thymidylate kinase (210 aa).

10 to 17 (GPEGAGKS) is a binding site for ATP.

The protein belongs to the thymidylate kinase family.

The catalysed reaction is dTMP + ATP = dTDP + ADP. Phosphorylation of dTMP to form dTDP in both de novo and salvage pathways of dTTP synthesis. This is Thymidylate kinase from Pseudomonas fluorescens (strain ATCC BAA-477 / NRRL B-23932 / Pf-5).